A 920-amino-acid chain; its full sequence is Whirlin (920 aa).

The 84-residue stretch at 141-224 (LVSLRRAKAH…LVLSVYSAGR (84 aa)) folds into the PDZ 1 domain. A disordered region spans residues 241-262 (QGRSTSPPSSLPHGSTLRQHED). A compositionally biased stretch (polar residues) spans 242 to 257 (GRSTSPPSSLPHGSTL). Residues 278 to 360 (KVNLVLGDGR…LILTVKDVGR (83 aa)) enclose the PDZ 2 domain. Disordered regions lie at residues 502-536 (MKAR…TSTT), 561-603 (CETT…QGHD), 630-730 (FSAP…AMGA), and 752-828 (RALP…PTST). The span at 520–536 (SYSDTGSSTGSHGTSTT) shows a compositional bias: low complexity. The segment covering 561 to 570 (CETTQGSTNA) has biased composition (polar residues). Composition is skewed to pro residues over residues 589–598 (IKPPPPPPPL) and 636–651 (RSPP…PTPG). The segment covering 655 to 674 (ARDSPSSPIYASISHANPSS) has biased composition (polar residues). Ser698 carries the post-translational modification Phosphoserine. 2 stretches are compositionally biased toward polar residues: residues 756–775 (QTRT…TLSE) and 785–800 (EAST…NTKN). A compositionally biased stretch (basic and acidic residues) spans 802–813 (NGKELPQTERTT). The 84-residue stretch at 829–912 (LIRVRKSAAT…TKERDYIDFL (84 aa)) folds into the PDZ 3 domain.

Forms homooligomers. Interacts (via C-terminal PDZ domain) with MYO15A; this interaction is necessary for localization of WHRN to stereocilia tips. Interacts (via C-terminal PDZ domain) with MPP1/p55. Interacts with LRRC4C/NGL1. Interacts with MYO7A. Interacts with RPGR. Interacts with EPS8. Interacts with CASK. Interacts with CIB2. Component of USH2 complex, composed of ADGRV1, PDZD7, USH2A and WHRN. Interacts (via PDZ domains) with PDZD7; the interaction is direct. Interacts (via N-terminal PDZ domain) with USH2A (via cytoplasmic region). Interacts with ADGRV1/MASS1 (via cytoplasmic region). In terms of tissue distribution, ubiquitous. Highly expressed in heart, spleen, lung and liver. Highly expressed in brain, in the olfactory bulb, thalamus, layers III-V of the cerebral cortex and the molecular layer of cerebellum. Detected in soma and dendrites of thalamic neurons, and in cerebrum in cell bodies and apical dendrites of pyramidal neurons. Expressed in retina and inner ear.

The protein resides in the cytoplasm. Its subcellular location is the cell projection. It localises to the stereocilium. It is found in the growth cone. The protein localises to the synapse. Functionally, involved in hearing and vision as member of the USH2 complex. Necessary for elongation and maintenance of inner and outer hair cell stereocilia in the organ of Corti in the inner ear. Involved in the maintenance of the hair bundle ankle region, which connects stereocilia in cochlear hair cells of the inner ear. In retina photoreceptors, required for the maintenance of periciliary membrane complex that seems to play a role in regulating intracellular protein transport. This is Whirlin from Rattus norvegicus (Rat).